Here is a 298-residue protein sequence, read N- to C-terminus: Protease HtpX homolog (298 aa).

2 helical membrane passes run 14-34 and 39-59; these read VVLL…AGYL and YAMG…SMIF. Histidine 143 is a Zn(2+) binding site. Glutamate 144 is a catalytic residue. Histidine 147 serves as a coordination point for Zn(2+). Transmembrane regions (helical) follow at residues 158 to 178 and 197 to 217; these read IAVA…RMLW and IITL…ASLI. Glutamate 226 serves as a coordination point for Zn(2+).

It belongs to the peptidase M48B family. It depends on Zn(2+) as a cofactor.

It localises to the cell membrane. The sequence is that of Protease HtpX homolog from Streptococcus pyogenes serotype M1.